We begin with the raw amino-acid sequence, 734 residues long: Terpene cyclase/mutase ntnI (734 aa).

The segment covering 1–12 (MQSHIGQWTSTA) has biased composition (polar residues). The segment at 1–26 (MQSHIGQWTSTAKGHLSRDENGDEKT) is disordered. Over residues 16-26 (LSRDENGDEKT) the composition is skewed to basic and acidic residues. 4 PFTB repeats span residues 130–172 (AIEI…RLLG), 493–534 (LHNA…SGKT), 570–610 (RTRG…ALAG), and 619–668 (SRKG…GLMH).

Belongs to the terpene cyclase/mutase family.

It participates in secondary metabolite biosynthesis; terpenoid biosynthesis. Its function is as follows. Terpene cyclase/mutase; part of the gene cluster that mediates the biosynthesis of the meroterpenoids nectripenoids A and B, as well as cochliquninone D and isocochliquninone E. The pathway probably begins with the HR-PKS ntnH that catalyzes two chain-extension steps to form a reduced triketide, which then primes the SAT domain in the NR-PKS ntnG to initiate three more cycles of extension to give a linear hexaketide corresponding to the polyketide part of nectripenoids. The FAD-dependent monooxygenase ntnJ then performs an oxidative decarboxylation at C11 of the ntnH/ntnG product, via an electrophilic aromatic hydroxylation with concomitant ipso-decarboxylation. The membrane-bound polyprenyl transferase ntnF then introduces a farnesyl group before the FAD-dependent monooxygenase ntnK functions as the first epoxidase on terminal C12'-C13' olefin, followed by a second epoxidation on C7'-C8' catalyzed by ntnA. The terpene cyclase/mutase ntnI then initiates the sequential tricyclic ring formation through protonation of the terminal epoxide and catalyzes the regioselective and stereoselective 6/6/6-tricyclic ring formation. The cytochrome P450 monooxygenase ntnM may then hydroxylate C1'. The chain is Terpene cyclase/mutase ntnI from Nectria sp.